A 292-amino-acid chain; its full sequence is 4-hydroxy-tetrahydrodipicolinate synthase (292 aa).

Thr-45 is a binding site for pyruvate. Residue Tyr-133 is the Proton donor/acceptor of the active site. Lys-161 serves as the catalytic Schiff-base intermediate with substrate. Ile-203 contacts pyruvate.

The protein belongs to the DapA family. As to quaternary structure, homodimer.

It is found in the cytoplasm. The enzyme catalyses L-aspartate 4-semialdehyde + pyruvate = (2S,4S)-4-hydroxy-2,3,4,5-tetrahydrodipicolinate + H2O + H(+). The protein operates within amino-acid biosynthesis; L-lysine biosynthesis via DAP pathway; (S)-tetrahydrodipicolinate from L-aspartate: step 3/4. In terms of biological role, catalyzes the condensation of (S)-aspartate-beta-semialdehyde [(S)-ASA] and pyruvate to 4-hydroxy-tetrahydrodipicolinate (HTPA). The sequence is that of 4-hydroxy-tetrahydrodipicolinate synthase from Pseudomonas savastanoi pv. phaseolicola (strain 1448A / Race 6) (Pseudomonas syringae pv. phaseolicola (strain 1448A / Race 6)).